We begin with the raw amino-acid sequence, 341 residues long: Holliday junction branch migration complex subunit RuvB (341 aa).

The tract at residues 1-180 is large ATPase domain (RuvB-L); the sequence is MAKSHTLNPE…FGIQLRLDYY (180 aa). ATP-binding residues include Leu-19, Arg-20, Gly-61, Lys-64, Thr-65, Thr-66, Arg-170, Tyr-180, and Arg-217. Thr-65 is a Mg(2+) binding site. A small ATPAse domain (RuvB-S) region spans residues 181 to 251; that stretch reads NDEEMKEIVL…LCLKAFEKMG (71 aa). A head domain (RuvB-H) region spans residues 254-341; sequence DLGLDGMDRQ…ENHGQDPTLF (88 aa). Positions 309 and 314 each coordinate DNA.

The protein belongs to the RuvB family. Homohexamer. Forms an RuvA(8)-RuvB(12)-Holliday junction (HJ) complex. HJ DNA is sandwiched between 2 RuvA tetramers; dsDNA enters through RuvA and exits via RuvB. An RuvB hexamer assembles on each DNA strand where it exits the tetramer. Each RuvB hexamer is contacted by two RuvA subunits (via domain III) on 2 adjacent RuvB subunits; this complex drives branch migration. In the full resolvosome a probable DNA-RuvA(4)-RuvB(12)-RuvC(2) complex forms which resolves the HJ.

The protein localises to the cytoplasm. The enzyme catalyses ATP + H2O = ADP + phosphate + H(+). In terms of biological role, the RuvA-RuvB-RuvC complex processes Holliday junction (HJ) DNA during genetic recombination and DNA repair, while the RuvA-RuvB complex plays an important role in the rescue of blocked DNA replication forks via replication fork reversal (RFR). RuvA specifically binds to HJ cruciform DNA, conferring on it an open structure. The RuvB hexamer acts as an ATP-dependent pump, pulling dsDNA into and through the RuvAB complex. RuvB forms 2 homohexamers on either side of HJ DNA bound by 1 or 2 RuvA tetramers; 4 subunits per hexamer contact DNA at a time. Coordinated motions by a converter formed by DNA-disengaged RuvB subunits stimulates ATP hydrolysis and nucleotide exchange. Immobilization of the converter enables RuvB to convert the ATP-contained energy into a lever motion, pulling 2 nucleotides of DNA out of the RuvA tetramer per ATP hydrolyzed, thus driving DNA branch migration. The RuvB motors rotate together with the DNA substrate, which together with the progressing nucleotide cycle form the mechanistic basis for DNA recombination by continuous HJ branch migration. Branch migration allows RuvC to scan DNA until it finds its consensus sequence, where it cleaves and resolves cruciform DNA. The protein is Holliday junction branch migration complex subunit RuvB of Leptospira borgpetersenii serovar Hardjo-bovis (strain JB197).